Here is a 245-residue protein sequence, read N- to C-terminus: 1-(5-phosphoribosyl)-5-[(5-phosphoribosylamino)methylideneamino] imidazole-4-carboxamide isomerase (245 aa).

The Proton acceptor role is filled by D8. Catalysis depends on D131, which acts as the Proton donor.

It belongs to the HisA/HisF family.

Its subcellular location is the cytoplasm. The enzyme catalyses 1-(5-phospho-beta-D-ribosyl)-5-[(5-phospho-beta-D-ribosylamino)methylideneamino]imidazole-4-carboxamide = 5-[(5-phospho-1-deoxy-D-ribulos-1-ylimino)methylamino]-1-(5-phospho-beta-D-ribosyl)imidazole-4-carboxamide. The protein operates within amino-acid biosynthesis; L-histidine biosynthesis; L-histidine from 5-phospho-alpha-D-ribose 1-diphosphate: step 4/9. The chain is 1-(5-phosphoribosyl)-5-[(5-phosphoribosylamino)methylideneamino] imidazole-4-carboxamide isomerase from Verminephrobacter eiseniae (strain EF01-2).